We begin with the raw amino-acid sequence, 337 residues long: F420-dependent glucose-6-phosphate dehydrogenase 2 (337 aa).

Asp-40 provides a ligand contact to coenzyme F420-(gamma-Glu)n. The active-site Proton donor is His-41. Coenzyme F420-(gamma-Glu)n contacts are provided by residues Thr-77 and 108 to 109 (TG). Catalysis depends on Glu-110, which acts as the Proton acceptor. Residues Asn-113, 178–179 (GG), and 181–182 (VV) each bind coenzyme F420-(gamma-Glu)n. Residues Thr-196, Lys-199, Lys-260, and Arg-284 each coordinate substrate.

The protein belongs to the F420-dependent glucose-6-phosphate dehydrogenase family. As to quaternary structure, homodimer.

The enzyme catalyses oxidized coenzyme F420-(gamma-L-Glu)(n) + D-glucose 6-phosphate + H(+) = 6-phospho-D-glucono-1,5-lactone + reduced coenzyme F420-(gamma-L-Glu)(n). Functionally, catalyzes the coenzyme F420-dependent oxidation of glucose 6-phosphate (G6P) to 6-phosphogluconolactone. This chain is F420-dependent glucose-6-phosphate dehydrogenase 2, found in Rhodococcus jostii (strain RHA1).